The sequence spans 61 residues: Pleurocidin-like peptide WF3 (61 aa).

Positions 1-22 (MKFTATFLVLSLVVLMAEPGEC) are cleaved as a signal peptide. The propeptide occupies 48-61 (YDEQQELNKRAVDE).

This sequence belongs to the pleurocidin family.

It is found in the secreted. In terms of biological role, antimicrobial peptide. The polypeptide is Pleurocidin-like peptide WF3 (ple3) (Pseudopleuronectes americanus (Winter flounder)).